Reading from the N-terminus, the 160-residue chain is Transcription antitermination protein NusB (160 aa).

The protein belongs to the NusB family.

Functionally, involved in transcription antitermination. Required for transcription of ribosomal RNA (rRNA) genes. Binds specifically to the boxA antiterminator sequence of the ribosomal RNA (rrn) operons. The protein is Transcription antitermination protein NusB of Rhizobium leguminosarum bv. trifolii (strain WSM2304).